The primary structure comprises 304 residues: MKPDMTVNLAGLELRNPVMTASGTFGYGREFADYVDLEKIGAFVTKGLSLKPRPGNPTPRIVETPGGMLNAIGLQNVGIEAFIAEKVPFLARVNTPAIVNFFGSTPEEYAELAGRLDEIPQVAGLEVNISCPNVKQGGIVFGTDPACAGQVVAACRRATKKPLIVKLSPNVTDVVVMAQACADAGADALSLINTLTGMAIDLKSRKPVLANITGGLSGPAIKPVALRMVWQVSRAVQVPLIGIGGITSATDALEFILAGASAVQVGTASFITPSASQEIAQGMERWLEEHGVARVSDLVGALEC.

Residues Ser22 and 46 to 47 contribute to the FMN site; that span reads KG. Substrate is bound by residues Lys46 and 70 to 74; that span reads NAIGL. Asn100 and Asn128 together coordinate FMN. Asn128 provides a ligand contact to substrate. Cys131 (nucleophile) is an active-site residue. 2 residues coordinate FMN: Lys166 and Ile192. 193-194 serves as a coordination point for substrate; sequence NT. FMN-binding positions include Gly218, 244–245, and 266–267; these read GG and GT.

Belongs to the dihydroorotate dehydrogenase family. Type 1 subfamily. As to quaternary structure, heterotetramer of 2 PyrK and 2 PyrD type B subunits. Requires FMN as cofactor.

Its subcellular location is the cytoplasm. The enzyme catalyses (S)-dihydroorotate + NAD(+) = orotate + NADH + H(+). Its pathway is pyrimidine metabolism; UMP biosynthesis via de novo pathway; orotate from (S)-dihydroorotate (NAD(+) route): step 1/1. Its function is as follows. Catalyzes the conversion of dihydroorotate to orotate with NAD(+) as electron acceptor. This chain is Dihydroorotate dehydrogenase B (NAD(+)), catalytic subunit (pyrD), found in Pelobacter propionicus (strain DSM 2379 / NBRC 103807 / OttBd1).